Consider the following 423-residue polypeptide: Histidine--tRNA ligase (423 aa).

Belongs to the class-II aminoacyl-tRNA synthetase family. In terms of assembly, homodimer.

Its subcellular location is the cytoplasm. The enzyme catalyses tRNA(His) + L-histidine + ATP = L-histidyl-tRNA(His) + AMP + diphosphate + H(+). This chain is Histidine--tRNA ligase, found in Geobacillus sp. (strain WCH70).